The following is a 161-amino-acid chain: Chaperone protein dnaJ 11, chloroplastic (161 aa).

The span at 1–18 shows a compositional bias: low complexity; sequence MLSSSPTSFTHPFLSSSP. The segment at 1–31 is disordered; it reads MLSSSPTSFTHPFLSSSPPLSPISPPSRTAR. The transit peptide at 1–36 directs the protein to the chloroplast; sequence MLSSSPTSFTHPFLSSSPPLSPISPPSRTARISPPL. Residues 65–133 form the J domain; the sequence is SLYDVLEVPL…EKRSVYDRRM (69 aa).

This sequence belongs to the DnaJ family. C/III subfamily. Expressed in roots, stems, leaves, flowers and developing siliques.

It localises to the plastid. Its subcellular location is the chloroplast stroma. Functionally, plays a continuous role in plant development probably in the structural organization of compartments. This is Chaperone protein dnaJ 11, chloroplastic (ATJ11) from Arabidopsis thaliana (Mouse-ear cress).